A 453-amino-acid polypeptide reads, in one-letter code: UDP-glucosyltransferase avaP (453 aa).

This sequence belongs to the UDP-glycosyltransferase family.

The protein operates within secondary metabolite biosynthesis. Its function is as follows. UDP-glucosyltransferase; part of the cluster that mediates the biosynthesis of a highly modified cyclo-arginine-tryptophan dipeptide (cRW). The first step of the pathway is perfornmed by the arginine-containing cyclodipeptide synthase (RCPDS) avaA that acts as the scaffold-generating enzyme and is responsible for formation of the cyclo-Arg-Trp (cRW) diketopiperazine. AvaB then acts as a multifunctional flavoenzyme that is responsible for generating the cyclo-Arg-formylkynurenine DKP, which can be deformylated by avaC. AvaB then further catalyzes an additional N-oxidation followed by cyclization and dehydration. The next step is an N-acetylation of the guanidine group catalyzed by the arginine N-acetyltransferase avaD. The roles of the additional enzymes identified within the ava cluster still have to be determined. The polypeptide is UDP-glucosyltransferase avaP (Aspergillus versicolor).